Reading from the N-terminus, the 696-residue chain is TBC1 domain family member 12 (696 aa).

M1 is modified (N-acetylmethionine). 3 disordered regions span residues 1-59 (MMGP…PPPR), 91-121 (PAAR…RRRR), and 156-234 (CCLA…ARAR). The segment covering 46–55 (PPEEAGEEEA) has biased composition (acidic residues). Residues 108-118 (RQDRRGPEEAR) show a composition bias toward basic and acidic residues. At S205 the chain carries Phosphoserine. Over residues 209-222 (LLPSAGPSAPLPAA) the composition is skewed to low complexity. S236 carries the post-translational modification Phosphoserine. A coiled-coil region spans residues 330–373 (KSVEEALRHRQEYDEMVAEAKKREIKEAHKRKRIMKERFKQEES). One can recognise a Rab-GAP TBC domain in the interval 405–613 (GLPPSVRGKV…RVWDVFCRDG (209 aa)). Residue S668 is modified to Phosphoserine. A Phosphothreonine modification is found at T669.

As to quaternary structure, interacts with RAB11A; this interaction recruits TBC1D12 to RAB11A-positive recycling endosomes.

Its subcellular location is the endosome. Functionally, RAB11A-binding protein that plays a role in neurite outgrowth. The polypeptide is TBC1 domain family member 12 (Tbc1d12) (Mus musculus (Mouse)).